The sequence spans 582 residues: Probable DNA ligase (582 aa).

Residue glutamate 248 participates in ATP binding. The active-site N6-AMP-lysine intermediate is lysine 250. 6 residues coordinate ATP: arginine 255, arginine 270, glutamate 299, phenylalanine 339, arginine 416, and lysine 422.

It belongs to the ATP-dependent DNA ligase family. Mg(2+) serves as cofactor.

The enzyme catalyses ATP + (deoxyribonucleotide)n-3'-hydroxyl + 5'-phospho-(deoxyribonucleotide)m = (deoxyribonucleotide)n+m + AMP + diphosphate.. In terms of biological role, DNA ligase that seals nicks in double-stranded DNA during DNA replication, DNA recombination and DNA repair. The polypeptide is Probable DNA ligase (Persephonella marina (strain DSM 14350 / EX-H1)).